The following is a 259-amino-acid chain: Protein YIF1B (259 aa).

Position 1 is an N-acetylmethionine (methionine 1). Residues 1-61 (MHATGLAAPA…QPSPGSLGYP (61 aa)) form a disordered region. The Cytoplasmic segment spans residues 9-153 (PAGTPRLRKW…APRFDINAPD (145 aa)). Position 12 is a phosphothreonine (threonine 12). Basic residues predominate over residues 14 to 24 (RLRKWPSKRRV). Position 64 is a phosphoserine (serine 64). Residues 154 to 174 (LYIPAMAFITYILVAGLALGT) form a helical membrane-spanning segment. Topologically, residues 175-186 (QDRMIGGVLTGL) are extracellular. A helical transmembrane segment spans residues 187–207 (LFGKIGYYLVLAWCCVSIFVF). Residues 208-237 (MIRTLRLKILAQAAAEGVPVRGARNQLRMY) are Cytoplasmic-facing. Residues 238 to 258 (LTMAVAAAQPVLMYWLTFHLV) traverse the membrane as a helical segment. Residue arginine 259 is a topological domain, extracellular.

It belongs to the YIF1 family. Interacts with HTR1A (via C-terminus). Interacts with ABCB9 (via TMD0); this interaction allows (but is not essential) the ER-to-Golgi trafficking and strongly depends on a salt bridge within TMD0. In terms of tissue distribution, highly expressed in brain. Expressed in heart, kidney, and lung and lower levels in spleen, muscle, and intestine (at protein level). Expressed in serotoninergic neurons (at protein level).

It is found in the endoplasmic reticulum membrane. Its subcellular location is the golgi apparatus membrane. The protein resides in the endoplasmic reticulum-Golgi intermediate compartment membrane. In terms of biological role, functions in endoplasmic reticulum to Golgi vesicle-mediated transport and regulates the proper organization of the endoplasmic reticulum and the Golgi. Plays a key role in targeting to neuronal dendrites receptors such as HTR1A. Plays also a role in primary cilium and sperm flagellum assembly probably through protein transport to these compartments. This is Protein YIF1B from Rattus norvegicus (Rat).